The primary structure comprises 442 residues: Methionine aminopeptidase 2-1 (442 aa).

Positions 1 to 92 (MAAQASEELE…ISELFPNNQY (92 aa)) are disordered. Residues 15-25 (NGQNGHAQEQV) are compositionally biased toward polar residues. Positions 30 to 47 (EAADNDDSEDDEKEEEGG) are enriched in acidic residues. Residues 56-72 (AKKKKKRKPKKKKKGGA) show a composition bias toward basic residues. A substrate-binding site is contributed by H195. Residues D215, D226, and H295 each coordinate a divalent metal cation. Position 303 (H303) interacts with substrate. Residues E328 and E423 each contribute to the a divalent metal cation site.

It belongs to the peptidase M24A family. Methionine aminopeptidase eukaryotic type 2 subfamily. Co(2+) is required as a cofactor. Zn(2+) serves as cofactor. It depends on Mn(2+) as a cofactor. Requires Fe(2+) as cofactor.

The protein localises to the cytoplasm. The enzyme catalyses Release of N-terminal amino acids, preferentially methionine, from peptides and arylamides.. In terms of biological role, cotranslationally removes the N-terminal methionine from nascent proteins. The N-terminal methionine is often cleaved when the second residue in the primary sequence is small and uncharged (Met-Ala-, Cys, Gly, Pro, Ser, Thr, or Val). The sequence is that of Methionine aminopeptidase 2-1 from Talaromyces marneffei (strain ATCC 18224 / CBS 334.59 / QM 7333) (Penicillium marneffei).